The chain runs to 263 residues: (E)-2-((N-methylformamido)methylene)succinate hydrolase (263 aa).

Catalysis depends on Ser96, which acts as the Nucleophile. Active-site residues include Asn120 and His241.

Belongs to the AB hydrolase superfamily. In terms of assembly, monomer.

The enzyme catalyses (E)-2-((N-methylformamido) methylene)succinate + 2 H2O + H(+) = succinate semialdehyde + methylamine + formate + CO2. Involved in the degradation of the pyridine ring of trigonelline (TG; N-methylnicotinate) into succinate and methylamine as carbon and nitrogen sources, respectively. Catalyzes the hydrolysis of (E)-2-((N-methylformamido)methylene)succinate (MFMS) into formic acid, succinate semialdehyde (SSA), methylamine and carbon dioxide. This is (E)-2-((N-methylformamido)methylene)succinate hydrolase from Acinetobacter baylyi (strain ATCC 33305 / BD413 / ADP1).